Consider the following 190-residue polypeptide: UPF0398 protein LAR_0869 (190 aa).

It belongs to the UPF0398 family.

This is UPF0398 protein LAR_0869 from Limosilactobacillus reuteri subsp. reuteri (strain JCM 1112) (Lactobacillus reuteri).